Here is a 143-residue protein sequence, read N- to C-terminus: Transcriptional regulator MraZ (143 aa).

SpoVT-AbrB domains are found at residues 5–47 and 76–119; these read EYQH…PQEE and ASEC…SKSE.

The protein belongs to the MraZ family. As to quaternary structure, forms oligomers.

The protein resides in the cytoplasm. It is found in the nucleoid. This is Transcriptional regulator MraZ from Listeria welshimeri serovar 6b (strain ATCC 35897 / DSM 20650 / CCUG 15529 / CIP 8149 / NCTC 11857 / SLCC 5334 / V8).